A 104-amino-acid polypeptide reads, in one-letter code: Large ribosomal subunit protein bL21 (104 aa).

Belongs to the bacterial ribosomal protein bL21 family. As to quaternary structure, part of the 50S ribosomal subunit. Contacts protein L20.

Functionally, this protein binds to 23S rRNA in the presence of protein L20. The protein is Large ribosomal subunit protein bL21 of Symbiobacterium thermophilum (strain DSM 24528 / JCM 14929 / IAM 14863 / T).